A 341-amino-acid polypeptide reads, in one-letter code: Anthranilate phosphoribosyltransferase (341 aa).

5-phospho-alpha-D-ribose 1-diphosphate-binding positions include Gly79, 82–83 (GD), Thr87, 89–92 (NIST), 107–115 (KHGNRAVSS), and Ser119. Residue Gly79 coordinates anthranilate. Ser91 contacts Mg(2+). An anthranilate-binding site is contributed by Asn110. An anthranilate-binding site is contributed by Arg165. Positions 224 and 225 each coordinate Mg(2+).

The protein belongs to the anthranilate phosphoribosyltransferase family. Homodimer. It depends on Mg(2+) as a cofactor.

The enzyme catalyses N-(5-phospho-beta-D-ribosyl)anthranilate + diphosphate = 5-phospho-alpha-D-ribose 1-diphosphate + anthranilate. Its pathway is amino-acid biosynthesis; L-tryptophan biosynthesis; L-tryptophan from chorismate: step 2/5. Functionally, catalyzes the transfer of the phosphoribosyl group of 5-phosphorylribose-1-pyrophosphate (PRPP) to anthranilate to yield N-(5'-phosphoribosyl)-anthranilate (PRA). The sequence is that of Anthranilate phosphoribosyltransferase from Bacillus cereus (strain AH187).